The following is a 185-amino-acid chain: Endonuclease IV (185 aa).

The catalysed reaction is Endonucleolytic cleavage of the 5' phosphodiester bond of deoxycytidine in single-stranded DNA.. Its function is as follows. Cleaves single-stranded DNA in a dC-specific manner. The cleavage occurs exclusively at the 5'-proximal position (dC1) within a dCs tract having a minimal size of 6 bases. These specific cleavages may have a detrimental effect on the replication of host dC-containing DNA. The chain is Endonuclease IV (denB) from Enterobacteria phage T4 (Bacteriophage T4).